A 132-amino-acid chain; its full sequence is Agouti-signaling protein (132 aa).

The signal sequence occupies residues 1-22 (MDVTRLLLATLLVFLCFFTAYS). Asparagine 39 is a glycosylation site (N-linked (GlcNAc...) asparagine). Residues 61 to 87 (QISRKEAEKKRSSKKEASMKKVARPRT) form a disordered region. Residues 63-79 (SRKEAEKKRSSKKEASM) are compositionally biased toward basic and acidic residues. Intrachain disulfides connect cysteine 93–cysteine 108, cysteine 100–cysteine 114, cysteine 107–cysteine 125, cysteine 111–cysteine 132, and cysteine 116–cysteine 123. The Agouti domain maps to 93–132 (CVTTRDSCKPPAPACCDPCASCQCRFFRSACSCRVLSLNC).

It is found in the secreted. Its function is as follows. Involved in the regulation of melanogenesis. The binding of ASP to MC1R precludes alpha-MSH initiated signaling and thus blocks production of cAMP, leading to a down-regulation of eumelanogenesis (brown/black pigment) and thus increasing synthesis of pheomelanin (yellow/red pigment). This Macaca silenus (Lion-tailed macaque) protein is Agouti-signaling protein (ASIP).